We begin with the raw amino-acid sequence, 950 residues long: General transcription factor II-I repeat domain-containing protein 2 (950 aa).

GTF2I-like repeat units lie at residues 100–194 and 324–418; these read QVDS…QPGG and LSSL…SNVG.

Belongs to the TFII-I family.

It is found in the nucleus. The chain is General transcription factor II-I repeat domain-containing protein 2 (GTF2IRD2) from Bos taurus (Bovine).